We begin with the raw amino-acid sequence, 332 residues long: 2,3-diketo-L-gulonate reductase (332 aa).

His44 acts as the Proton donor in catalysis. NAD(+) is bound by residues 168–174 (ITMVDMS), 224–225 (WK), and 304–306 (GHE).

Belongs to the LDH2/MDH2 oxidoreductase family. DlgD subfamily. Homodimer.

Its subcellular location is the cytoplasm. It carries out the reaction 3-dehydro-L-gulonate + NAD(+) = 2,3-dioxo-L-gulonate + NADH + H(+). The catalysed reaction is 3-dehydro-L-gulonate + NADP(+) = 2,3-dioxo-L-gulonate + NADPH + H(+). Catalyzes the reduction of 2,3-diketo-L-gulonate in the presence of NADH, to form 3-keto-L-gulonate. The chain is 2,3-diketo-L-gulonate reductase from Salmonella agona (strain SL483).